The sequence spans 440 residues: Thymidine phosphorylase (440 aa).

It belongs to the thymidine/pyrimidine-nucleoside phosphorylase family. As to quaternary structure, homodimer.

It catalyses the reaction thymidine + phosphate = 2-deoxy-alpha-D-ribose 1-phosphate + thymine. The protein operates within pyrimidine metabolism; dTMP biosynthesis via salvage pathway; dTMP from thymine: step 1/2. Its function is as follows. The enzymes which catalyze the reversible phosphorolysis of pyrimidine nucleosides are involved in the degradation of these compounds and in their utilization as carbon and energy sources, or in the rescue of pyrimidine bases for nucleotide synthesis. The protein is Thymidine phosphorylase of Burkholderia pseudomallei (strain 1106a).